The following is a 332-amino-acid chain: MAKIYHDLEVSLEVLSDKVITIIGYGSQGRAHALNLKDSGMKVIVAVRPNGESWKRALEEGMTVEKIEDAVQKSDIIMFLIPDTEQPAIYKEKVLPYLRPNQALGFAHGFNIHFSQIVPPPFVDVFMVAPKGPGPLVRDLYVEGKGVPALFAVYQDYTQKCRDIALAYAKGIGATRAGVLETTFKEETETDLFGEQVVLCGGVTALIKAGFETLVEAGYQPEVAYYECLHEMKLIVDLINQGGISFMRKAISDTAKYGDVTRGPRIVNEETKKEMKKILNEIQNGQFAKEWILENQVGRPVFNALLKKDEDHLIEKVGKVIREMMPWLKPKK.

Residues 2 to 182 enclose the KARI N-terminal Rossmann domain; the sequence is AKIYHDLEVS…GATRAGVLET (181 aa). Residues 25–28, arginine 48, serine 53, and 83–86 contribute to the NADP(+) site; these read YGSQ and DTEQ. The active site involves histidine 108. An NADP(+)-binding site is contributed by glycine 134. A KARI C-terminal knotted domain is found at 183–328; sequence TFKEETETDL…KVIREMMPWL (146 aa). The Mg(2+) site is built by aspartate 191, glutamate 195, glutamate 227, and glutamate 231. Residue serine 252 participates in substrate binding.

This sequence belongs to the ketol-acid reductoisomerase family. It depends on Mg(2+) as a cofactor.

The enzyme catalyses (2R)-2,3-dihydroxy-3-methylbutanoate + NADP(+) = (2S)-2-acetolactate + NADPH + H(+). It carries out the reaction (2R,3R)-2,3-dihydroxy-3-methylpentanoate + NADP(+) = (S)-2-ethyl-2-hydroxy-3-oxobutanoate + NADPH + H(+). Its pathway is amino-acid biosynthesis; L-isoleucine biosynthesis; L-isoleucine from 2-oxobutanoate: step 2/4. It participates in amino-acid biosynthesis; L-valine biosynthesis; L-valine from pyruvate: step 2/4. Functionally, involved in the biosynthesis of branched-chain amino acids (BCAA). Catalyzes an alkyl-migration followed by a ketol-acid reduction of (S)-2-acetolactate (S2AL) to yield (R)-2,3-dihydroxy-isovalerate. In the isomerase reaction, S2AL is rearranged via a Mg-dependent methyl migration to produce 3-hydroxy-3-methyl-2-ketobutyrate (HMKB). In the reductase reaction, this 2-ketoacid undergoes a metal-dependent reduction by NADPH to yield (R)-2,3-dihydroxy-isovalerate. This chain is Ketol-acid reductoisomerase (NADP(+)), found in Dictyoglomus thermophilum (strain ATCC 35947 / DSM 3960 / H-6-12).